Consider the following 79-residue polypeptide: MAVKLKLTRLGSKKHPFYRVVAATDETRRDGRPLEFLGYYNPMTDPVEVKLDADKIKEWLARGAEPTDTVRALIKKHMA.

This sequence belongs to the bacterial ribosomal protein bS16 family.

This Desulfovibrio desulfuricans (strain ATCC 27774 / DSM 6949 / MB) protein is Small ribosomal subunit protein bS16.